The primary structure comprises 296 residues: dTDP-4-dehydrorhamnose reductase (296 aa).

NADH contacts are provided by residues 10–12 (GQI), 35–36 (DL), and 59–61 (AYT). NADPH-binding positions include 11–12 (QI), 35–36 (DL), and 59–61 (AYT). DTDP-beta-L-rhamnose is bound at residue 100-101 (TD). NADH-binding residues include tyrosine 124 and lysine 128. Residues tyrosine 124 and lysine 128 each contribute to the NADPH site. Tyrosine 124 serves as the catalytic Proton donor/acceptor. Tryptophan 149 contributes to the dTDP-beta-L-rhamnose binding site.

It belongs to the dTDP-4-dehydrorhamnose reductase family. In terms of assembly, homodimer. The cofactor is Mg(2+).

The catalysed reaction is dTDP-beta-L-rhamnose + NADP(+) = dTDP-4-dehydro-beta-L-rhamnose + NADPH + H(+). The protein operates within carbohydrate biosynthesis; dTDP-L-rhamnose biosynthesis. In terms of biological role, involved in the biosynthesis of the dTDP-L-rhamnose which is an important component of lipopolysaccharide (LPS). Catalyzes the reduction of dTDP-6-deoxy-L-lyxo-4-hexulose to yield dTDP-L-rhamnose. RmlD uses NADH and NADPH nearly equally well. The polypeptide is dTDP-4-dehydrorhamnose reductase (Sinorhizobium fredii (strain NBRC 101917 / NGR234)).